Consider the following 175-residue polypeptide: Short chain dehydrogenase/reductase dpmpG (175 aa).

The NADP(+) site is built by Ile-18, Asp-71, Asn-98, and Lys-132.

This sequence belongs to the short-chain dehydrogenases/reductases (SDR) family.

The protein operates within secondary metabolite biosynthesis; terpenoid biosynthesis. In terms of biological role, short chain dehydrogenase/reductase; part of the gene cluster that mediates the biosynthesis of diterpenoid pyrones. The first step of the pathway is the synthesis of the alpha-pyrone moiety by the polyketide synthase dpmpA via condensation of one acetyl-CoA starter unit with 3 malonyl-CoA units and 2 methylations. The alpha-pyrone is then combined with geranylgeranyl pyrophosphate (GGPP) formed by the GGPP synthase dpmpD through the action of the prenyltransferase dpmpC to yield a linear alpha-pyrone diterpenoid. Subsequent steps in the diterpenoid pyrone biosynthetic pathway involve the decalin core formation, which is initiated by the epoxidation of the C10-C11 olefin by the FAD-dependent oxidoreductase dpmpE, and is followed by a cyclization cascade catalyzed by the terpene cyclase dpmpB. The short chain dehydrogenase/reductase dpmpG then oxidizes the 8S hydroxy group to a ketone and the short chain dehydrogenase/reductase dpmpH reduces the ketone to the 8R hydroxy group to yield higginsianin B. Higginsianin B is further methylated by the methyltransferase dpmpI to produce the intermediate named FDDP B. The cytochrome P450 monooxygenase dpmpJ then oxidizes the C-26 methyl to primary alcohol, producing the final diterpenoid pyrone with a C-26 primary alcohol on the gamma-pyrone moiety named FDDP C. In Macrophomina phaseolina (strain MS6) (Charcoal rot fungus), this protein is Short chain dehydrogenase/reductase dpmpG.